The sequence spans 228 residues: 2-phospho-L-lactate guanylyltransferase (228 aa).

It belongs to the CofC family. Homodimer.

The catalysed reaction is (2S)-2-phospholactate + GTP + H(+) = (2S)-lactyl-2-diphospho-5'-guanosine + diphosphate. Its pathway is cofactor biosynthesis; coenzyme F420 biosynthesis. Guanylyltransferase that catalyzes the activation of (2S)-2-phospholactate (2-PL) as (2S)-lactyl-2-diphospho-5'-guanosine, via the condensation of 2-PL with GTP. It is involved in the biosynthesis of coenzyme F420, a hydride carrier cofactor. This chain is 2-phospho-L-lactate guanylyltransferase, found in Methanosphaera stadtmanae (strain ATCC 43021 / DSM 3091 / JCM 11832 / MCB-3).